Reading from the N-terminus, the 386-residue chain is MAGDSVKSAIIGIAGGPFSGKTQLCEQLLERLKSSAPSTFSKLIHLTSFLYPNSVDRYALSSYDIEAFKKVLSLISQGAEKICLPDGSCIKLPVDQNRIILIEGYYLLLPELLPYYTSKIFVYEDADTRLERCVLQRVKAEKGDLTKVLNDFVTLSKPAYDSSIHPTRENADIILPQKENIDTALLFVSQHLQDILAEMNKTSSSNTVKYDTQHETYMKLAHEMARTSLSNREVPVSCVFVYKGEVIGRGFNETNCSLSGIRHAELIAIEKILEHYPASVFKETTLYVTVEPCLMCAAALKQLHIKAVYFGCGNDRFGGCGSVFSINKDQSIDPSYPVYPGLFYSEAVMLMREFYVQENVKAPVPQSKKQRVLKREVKSLDLSRFK.

Residues 212–322 (TQHETYMKLA…GNDRFGGCGS (111 aa)) form the CMP/dCMP-type deaminase domain. Histidine 263 is a binding site for Zn(2+). The active-site Proton donor is the glutamate 265. Cysteine 293 and cysteine 296 together coordinate Zn(2+).

Belongs to the cytidine and deoxycytidylate deaminase family. ADAT2 subfamily. In terms of assembly, heterodimer with Tad3. Zn(2+) serves as cofactor.

The catalysed reaction is adenosine(34) in tRNA + H2O + H(+) = inosine(34) in tRNA + NH4(+). In terms of biological role, structural subunit of tRNA-specific adenosine deaminase, which deaminates adenosine-34 (the first, also called wobble position of the anticodon) to inosine in many tRNAs. Inosine-34 allows the decoding of 3 different nucleotides at the third position of mRNA codons, as inosine is able to pair with U, C, and A. The wobble inosine tRNA modification is essential for cell cycle progression in the G1/S and G2/M transitions in fission yeast. This Schizosaccharomyces pombe (strain 972 / ATCC 24843) (Fission yeast) protein is tRNA-specific adenosine deaminase subunit tad2 (tad2).